Reading from the N-terminus, the 284-residue chain is Protoheme IX farnesyltransferase (284 aa).

8 helical membrane passes run 13–33 (IIIG…FPFF), 35–55 (VFLF…SCIF), 87–107 (IFAS…VNIL), 108–128 (SMFL…FFLK), 133–153 (YSTF…HTAI), 162–182 (FLLF…IAIL), 224–244 (FLGY…FYWL), and 264–284 (FYYS…DFIF).

This sequence belongs to the UbiA prenyltransferase family. Protoheme IX farnesyltransferase subfamily.

Its subcellular location is the cell membrane. It catalyses the reaction heme b + (2E,6E)-farnesyl diphosphate + H2O = Fe(II)-heme o + diphosphate. The protein operates within porphyrin-containing compound metabolism; heme O biosynthesis; heme O from protoheme: step 1/1. Its function is as follows. Converts heme B (protoheme IX) to heme O by substitution of the vinyl group on carbon 2 of heme B porphyrin ring with a hydroxyethyl farnesyl side group. The protein is Protoheme IX farnesyltransferase of Buchnera aphidicola subsp. Schizaphis graminum (strain Sg).